Consider the following 550-residue polypeptide: Arginine--tRNA ligase (550 aa).

The short motif at 130–140 (ANPTGPIHIGG) is the 'HIGH' region element.

This sequence belongs to the class-I aminoacyl-tRNA synthetase family. Monomer.

It localises to the cytoplasm. The enzyme catalyses tRNA(Arg) + L-arginine + ATP = L-arginyl-tRNA(Arg) + AMP + diphosphate. The protein is Arginine--tRNA ligase of Mycobacterium sp. (strain KMS).